A 337-amino-acid polypeptide reads, in one-letter code: tRNA-cytidine(32) 2-sulfurtransferase (337 aa).

The PP-loop motif motif lies at 71–76; that stretch reads SGGKDS. [4Fe-4S] cluster-binding residues include cysteine 146, cysteine 149, and cysteine 237.

It belongs to the TtcA family. In terms of assembly, homodimer. Mg(2+) serves as cofactor. [4Fe-4S] cluster is required as a cofactor.

Its subcellular location is the cytoplasm. It carries out the reaction cytidine(32) in tRNA + S-sulfanyl-L-cysteinyl-[cysteine desulfurase] + AH2 + ATP = 2-thiocytidine(32) in tRNA + L-cysteinyl-[cysteine desulfurase] + A + AMP + diphosphate + H(+). Its pathway is tRNA modification. In terms of biological role, catalyzes the ATP-dependent 2-thiolation of cytidine in position 32 of tRNA, to form 2-thiocytidine (s(2)C32). The sulfur atoms are provided by the cysteine/cysteine desulfurase (IscS) system. The chain is tRNA-cytidine(32) 2-sulfurtransferase from Burkholderia vietnamiensis (strain G4 / LMG 22486) (Burkholderia cepacia (strain R1808)).